Here is an 82-residue protein sequence, read N- to C-terminus: Large ribosomal subunit protein uL23 (82 aa).

It belongs to the universal ribosomal protein uL23 family. As to quaternary structure, part of the 50S ribosomal subunit. Contacts protein L29.

Functionally, binds to 23S rRNA. One of the proteins that surrounds the polypeptide exit tunnel on the outside of the ribosome. The protein is Large ribosomal subunit protein uL23 of Sulfolobus acidocaldarius (strain ATCC 33909 / DSM 639 / JCM 8929 / NBRC 15157 / NCIMB 11770).